Consider the following 94-residue polypeptide: Integration host factor subunit beta (94 aa).

Belongs to the bacterial histone-like protein family. Heterodimer of an alpha and a beta chain.

Functionally, this protein is one of the two subunits of integration host factor, a specific DNA-binding protein that functions in genetic recombination as well as in transcriptional and translational control. The sequence is that of Integration host factor subunit beta from Ruegeria pomeroyi (strain ATCC 700808 / DSM 15171 / DSS-3) (Silicibacter pomeroyi).